The sequence spans 301 residues: Formamidopyrimidine-DNA glycosylase (301 aa).

Catalysis depends on proline 2, which acts as the Schiff-base intermediate with DNA. Glutamate 3 acts as the Proton donor in catalysis. Lysine 58 functions as the Proton donor; for beta-elimination activity in the catalytic mechanism. DNA contacts are provided by histidine 109, arginine 131, and lysine 174. An FPG-type zinc finger spans residues 265-301; it reads SVYDREGQACRTPGCGGTVARIVQAGRSTFYCATCQK. Arginine 291 functions as the Proton donor; for delta-elimination activity in the catalytic mechanism.

Belongs to the FPG family. As to quaternary structure, monomer. Zn(2+) is required as a cofactor.

It catalyses the reaction Hydrolysis of DNA containing ring-opened 7-methylguanine residues, releasing 2,6-diamino-4-hydroxy-5-(N-methyl)formamidopyrimidine.. It carries out the reaction 2'-deoxyribonucleotide-(2'-deoxyribose 5'-phosphate)-2'-deoxyribonucleotide-DNA = a 3'-end 2'-deoxyribonucleotide-(2,3-dehydro-2,3-deoxyribose 5'-phosphate)-DNA + a 5'-end 5'-phospho-2'-deoxyribonucleoside-DNA + H(+). Involved in base excision repair of DNA damaged by oxidation or by mutagenic agents. Acts as a DNA glycosylase that recognizes and removes damaged bases. Has a preference for oxidized purines, such as 7,8-dihydro-8-oxoguanine (8-oxoG). Has AP (apurinic/apyrimidinic) lyase activity and introduces nicks in the DNA strand. Cleaves the DNA backbone by beta-delta elimination to generate a single-strand break at the site of the removed base with both 3'- and 5'-phosphates. This is Formamidopyrimidine-DNA glycosylase from Rhizobium leguminosarum bv. trifolii (strain WSM2304).